The chain runs to 160 residues: Single-stranded DNA-binding protein 3 (160 aa).

The 103-residue stretch at 2 to 104 folds into the SSB domain; that stretch reads MNRVVLVGRL…IVAESVQFLE (103 aa). Over residues 106 to 133 the composition is skewed to polar residues; sequence KQNGAGGSTSNNNQSETNYSNDNKTSSY. The segment at 106-160 is disordered; that stretch reads KQNGAGGSTSNNNQSETNYSNDNKTSSYRADRSQNGDSFANEGAPVDINPDDLPF.

As to quaternary structure, homotetramer.

This Listeria innocua serovar 6a (strain ATCC BAA-680 / CLIP 11262) protein is Single-stranded DNA-binding protein 3 (ssb3).